Here is a 176-residue protein sequence, read N- to C-terminus: HTH-type transcriptional regulator DctR (176 aa).

The region spanning 109–174 (VPEAAVSLSR…ELVRHQHIDY (66 aa)) is the HTH luxR-type domain. The segment at residues 133–152 (TEDILEKLKISLKTFYCHKH) is a DNA-binding region (H-T-H motif).

Its function is as follows. May act as a transcriptional regulator of dctA. In Escherichia coli (strain K12), this protein is HTH-type transcriptional regulator DctR (dctR).